A 383-amino-acid polypeptide reads, in one-letter code: Succinyl-diaminopimelate desuccinylase (383 aa).

A Zn(2+)-binding site is contributed by His-73. The active site involves Asp-75. Asp-107 is a Zn(2+) binding site. The active-site Proton acceptor is the Glu-141. Residues Glu-142, Glu-170, and His-356 each coordinate Zn(2+).

Belongs to the peptidase M20A family. DapE subfamily. In terms of assembly, homodimer. It depends on Zn(2+) as a cofactor. Requires Co(2+) as cofactor.

It catalyses the reaction N-succinyl-(2S,6S)-2,6-diaminopimelate + H2O = (2S,6S)-2,6-diaminopimelate + succinate. It functions in the pathway amino-acid biosynthesis; L-lysine biosynthesis via DAP pathway; LL-2,6-diaminopimelate from (S)-tetrahydrodipicolinate (succinylase route): step 3/3. Its function is as follows. Catalyzes the hydrolysis of N-succinyl-L,L-diaminopimelic acid (SDAP), forming succinate and LL-2,6-diaminopimelate (DAP), an intermediate involved in the bacterial biosynthesis of lysine and meso-diaminopimelic acid, an essential component of bacterial cell walls. In Pseudomonas entomophila (strain L48), this protein is Succinyl-diaminopimelate desuccinylase.